A 296-amino-acid polypeptide reads, in one-letter code: MEQFRNIGIIGRLGSVQVLDTVRRLKRFLLDRHLHVILEETIAEVLPGHGLQTSSRKMLGEVCDMVIVVGGDGSLLGAARALARHNVPVLGINRGSLGFLTDIRPDELEVKCAEVLDGHYLVENRFLLQAEVRRHGEAIGQGDALNDVVLHPGKSTRMIEFEIYIDGQFVCSQKADGLIVATPTGSTAYALSAGGPIMHPKLDAIVIVPMYPHTLSGRPIVVDGNSELKIVVSKDMTIYPQVSCDGQNHFTCAPGDTITVSKKPQKLRLIHPLDHNYYEVCRTKLGWGSRLGGGGD.

Aspartate 72 serves as the catalytic Proton acceptor. Residues 72 to 73 (DG), 146 to 147 (ND), arginine 157, lysine 174, aspartate 176, 187 to 192 (TAYALS), and glutamine 247 each bind NAD(+).

Belongs to the NAD kinase family. A divalent metal cation is required as a cofactor.

The protein resides in the cytoplasm. The enzyme catalyses NAD(+) + ATP = ADP + NADP(+) + H(+). Involved in the regulation of the intracellular balance of NAD and NADP, and is a key enzyme in the biosynthesis of NADP. Catalyzes specifically the phosphorylation on 2'-hydroxyl of the adenosine moiety of NAD to yield NADP. The protein is NAD kinase of Pseudomonas syringae pv. tomato (strain ATCC BAA-871 / DC3000).